Here is a 239-residue protein sequence, read N- to C-terminus: ATP-dependent dethiobiotin synthetase BioD (239 aa).

15–20 contacts ATP; that stretch reads EIGKTF. Threonine 19 provides a ligand contact to Mg(2+). Lysine 40 is a catalytic residue. ATP-binding positions include aspartate 57, 118 to 121, 178 to 179, and 211 to 213; these read EGVG, NH, and AHL. Mg(2+)-binding residues include aspartate 57 and glutamate 118.

The protein belongs to the dethiobiotin synthetase family. In terms of assembly, homodimer. Requires Mg(2+) as cofactor.

The protein resides in the cytoplasm. It catalyses the reaction (7R,8S)-7,8-diammoniononanoate + CO2 + ATP = (4R,5S)-dethiobiotin + ADP + phosphate + 3 H(+). It participates in cofactor biosynthesis; biotin biosynthesis; biotin from 7,8-diaminononanoate: step 1/2. Its function is as follows. Catalyzes a mechanistically unusual reaction, the ATP-dependent insertion of CO2 between the N7 and N8 nitrogen atoms of 7,8-diaminopelargonic acid (DAPA, also called 7,8-diammoniononanoate) to form a ureido ring. This chain is ATP-dependent dethiobiotin synthetase BioD, found in Burkholderia ambifaria (strain MC40-6).